The chain runs to 443 residues: DILAAFRVTPQPGVPPEEAGAAVAAESSTGTWTTVWTDGLTSLDRYKGRCYHIEPVPGDPDQYICYVAYPLDLFEEGSXTNMFTSIVGNVFGFKALRVLRLEDLRIPVAYTKTFQGPPHGIQVERDKLNKYGRPLMGCTIKPKLGLSAKNYGRAVYECLRGGLDFTKDDENVNSQPFMRWRDRFLFCAEAIYKAQAETGEIKGHYLNATAGTCEEMMKRAIFARELGVPIVMHDYLTGGFTANTTLAHYCRDNGLLLHIHRAMHAVIDRQKNHGMHFRVLAKALRMSGGDHIHAGTVVGKLEGERDITLGFVDLLRDDYIEKDRSRGIYFTQDWVSLPGVIPVASGGIHVWHMPALTEIFGDDSVLQFGGGTLGHPWGNAPGAVANRVALEACVKARNEGRDLAAEGNVIIREACKWSPELSAACEVWKEIKFEFEAMDTLDK.

Substrate is bound by residues N89 and T139. K141 (proton acceptor) is an active-site residue. K143 lines the substrate pocket. The Mg(2+) site is built by K167, D169, and E170. K167 carries the post-translational modification N6-carboxylysine. The active-site Proton acceptor is the H260. 3 residues coordinate substrate: R261, H293, and S345.

Belongs to the RuBisCO large chain family. Type I subfamily. As to quaternary structure, heterohexadecamer of 8 large chains and 8 small chains; disulfide-linked. The disulfide link is formed within the large subunit homodimers. Mg(2+) is required as a cofactor. In terms of processing, the disulfide bond which can form in the large chain dimeric partners within the hexadecamer appears to be associated with oxidative stress and protein turnover.

The protein localises to the plastid. Its subcellular location is the chloroplast. The enzyme catalyses 2 (2R)-3-phosphoglycerate + 2 H(+) = D-ribulose 1,5-bisphosphate + CO2 + H2O. It carries out the reaction D-ribulose 1,5-bisphosphate + O2 = 2-phosphoglycolate + (2R)-3-phosphoglycerate + 2 H(+). Its function is as follows. RuBisCO catalyzes two reactions: the carboxylation of D-ribulose 1,5-bisphosphate, the primary event in carbon dioxide fixation, as well as the oxidative fragmentation of the pentose substrate in the photorespiration process. Both reactions occur simultaneously and in competition at the same active site. The sequence is that of Ribulose bisphosphate carboxylase large chain from Verbena bonariensis (Argentinian vervain).